We begin with the raw amino-acid sequence, 284 residues long: Ribosome-associated protein oga1 (284 aa).

The segment at 1–284 (MSVASKNLFD…LSETDFPALA (284 aa)) is disordered. The span at 22-36 (TEKKTAASRDKKRSD) shows a compositional bias: basic and acidic residues. Serine 37 and serine 51 each carry phosphoserine. Composition is skewed to basic and acidic residues over residues 52-73 (RKRDPNQPTPRERTVNKKADQP) and 119-141 (GREFDRHSQTGRVDTKKATERGW). Position 160 is a phosphothreonine (threonine 160). Position 162 is a phosphoserine (serine 162). Threonine 166 bears the Phosphothreonine mark. Basic and acidic residues-rich tracts occupy residues 172 to 186 (ENVKTLDEYLSERKS) and 194 to 209 (TVEKLENATKVEKSAP). Over residues 214–224 (ASLKKSASQKK) the composition is skewed to low complexity. Over residues 226-237 (AAKESKPKKVLL) the composition is skewed to basic and acidic residues. The segment covering 245–254 (ARPARGGRPN) has biased composition (low complexity). A compositionally biased stretch (polar residues) spans 263–277 (ETASKTQQAPPTLSE).

The protein belongs to the STM1 family. In terms of assembly, associates with mature 80S ribosomes. Binds to the head domain of the 40S ribosomal subunit and prevents mRNA binding by inserting its alpha-helix domain towards the mRNA entry tunnel at the decoding site, where it blocks the binding of tRNA and mRNA at the A- and P-sites. Interacts with eEF2; interaction sequesters eEF2 at the A-site of the ribosome, thereby blocking the interaction sites of the mRNA-tRNA complex, promoting ribosome stabilization and hibernation. Interacts with sad1. In terms of processing, phosphorylation by TORC1 upon nutrient replenishment inhibits STM1 and causes its release from dormant ribosomes.

Its subcellular location is the cytoplasm. Ribosome preservation factor that protect a small pool of nontranslating, vacant ribosomes in cells under nutrient starvation conditions. Under nutrient-limiting conditions, cells reduce ribosome biogenesis and degrade ribosomes via autophagy (ribophagy) or proteasomal degradation. To avoid excessive degradation during starvation, STM1 binds to and protects 80S ribosomes from proteasomal degradation. Under nutrient-sufficient conditions, TORC1 phosphorylates and inhibits STM1 to prevent formation of dormant 80S ribosomes. Acts as an inhibitor of mRNA translation by promoting ribosome hibernation: clamps the two ribosomal subunits, thereby preventing their dissociation, and inhibits translation by excluding mRNA-binding. Acts via its association with eEF2, promoting ribosome stabilization and storage in an inactive state. May also repress translation by preventing association of eEF3 with ribosomes. Binds specifically G4 quadruplex (these are four-stranded right-handed helices, stabilized by guanine base quartets) and purine motif triplex (characterized by a third, antiparallel purine-rich DNA strand located within the major groove of a homopurine stretch of duplex DNA) nucleic acid structures. These structures may be present at telomeres or in rRNAs. Extends chronological lifespan when overexpressed. This chain is Ribosome-associated protein oga1, found in Schizosaccharomyces pombe (strain 972 / ATCC 24843) (Fission yeast).